The following is a 71-amino-acid chain: Brevinin-1E (71 aa).

An N-terminal signal peptide occupies residues 1–22; the sequence is MFTLKKSMLLLFFLGTINLSLC. A propeptide spanning residues 23-45 is cleaved from the precursor; that stretch reads EEERDADEEERRDNPDESEVEVE. Cysteines 65 and 71 form a disulfide.

This sequence belongs to the frog skin active peptide (FSAP) family. Brevinin subfamily. As to expression, expressed by the skin glands.

Its subcellular location is the secreted. In terms of biological role, shows antibacterial activity against representative Gram-negative and Gram-positive bacterial species, and a very high hemolytic activity. The protein is Brevinin-1E of Pelophylax lessonae (Pool frog).